We begin with the raw amino-acid sequence, 153 residues long: Lipoprotein signal peptidase (153 aa).

Helical transmembrane passes span 7–27 (LIII…LNNY), 59–79 (NLIR…IFYM), and 93–113 (SIII…GSVI). Active-site residues include Asp-114 and Asp-132. A helical membrane pass occupies residues 123-143 (WHFPVFNFADISIFIGFLILI).

The protein belongs to the peptidase A8 family.

It localises to the cell membrane. It catalyses the reaction Release of signal peptides from bacterial membrane prolipoproteins. Hydrolyzes -Xaa-Yaa-Zaa-|-(S,diacylglyceryl)Cys-, in which Xaa is hydrophobic (preferably Leu), and Yaa (Ala or Ser) and Zaa (Gly or Ala) have small, neutral side chains.. It participates in protein modification; lipoprotein biosynthesis (signal peptide cleavage). Its function is as follows. This protein specifically catalyzes the removal of signal peptides from prolipoproteins. This Wigglesworthia glossinidia brevipalpis protein is Lipoprotein signal peptidase.